Reading from the N-terminus, the 488-residue chain is Glutamyl-tRNA(Gln) amidotransferase subunit A (488 aa).

Catalysis depends on charge relay system residues lysine 77 and serine 152. Serine 176 (acyl-ester intermediate) is an active-site residue.

It belongs to the amidase family. GatA subfamily. Heterotrimer of A, B and C subunits.

The enzyme catalyses L-glutamyl-tRNA(Gln) + L-glutamine + ATP + H2O = L-glutaminyl-tRNA(Gln) + L-glutamate + ADP + phosphate + H(+). Functionally, allows the formation of correctly charged Gln-tRNA(Gln) through the transamidation of misacylated Glu-tRNA(Gln) in organisms which lack glutaminyl-tRNA synthetase. The reaction takes place in the presence of glutamine and ATP through an activated gamma-phospho-Glu-tRNA(Gln). The sequence is that of Glutamyl-tRNA(Gln) amidotransferase subunit A from Streptococcus pneumoniae serotype 19F (strain G54).